A 552-amino-acid chain; its full sequence is MFEGLSPLARDARSWPFEQARATIARVLRVRLPDRADQDAAKALIDAGKTDEAVKAYPALAKAVIFETGYGPSGLPHLGTFGEVARTTMVRQAFRALTDEAIPTRLIAFSDDMDGLRKVPDNIENKQPLIEDLGKPLTVVRDPFGTHDSFGAHNNARLRAFLDGFGFEYEFVSSTDCYKGGLFDATLLTALERFDAIQKVMLPTLGEERRATYSPFLPISPSTGKVLQVPTLERNVEKGTIVFEDEDGSKVEVPVTGGHVKMQWKPDWAMRWTALGVDYEMSGKDLIDSVKASGAICKALGGVPPEGFNYELFLDENNQKISKSKGNGLSMEDWLRYGAPESLSYYMFQSPKSAKKLYFDVIPKASDEYLQQLDGFGRQEPAKQLDNPVWHIHGGKPPQQGSPVSFSLMLNLVSAADASTKEILWGFLSRYIPGASPETQPLLDRLAGYAINYYEDFVKPSKVFRAPSDQERAAMLDLLAKLKAMPAGTQDAELIQNEVFEVGKTHGFDPLRAWFQALYEVLLGQSQGPRFGSFAAIFGIDRTVALIEEKLG.

The short motif at Pro72 to Thr80 is the 'HIGH' region element. The 'KMSKS' region motif lies at Lys320 to Ser324. Lys323 lines the ATP pocket.

Belongs to the class-I aminoacyl-tRNA synthetase family.

The protein resides in the cytoplasm. It carries out the reaction tRNA(Lys) + L-lysine + ATP = L-lysyl-tRNA(Lys) + AMP + diphosphate. This Caulobacter vibrioides (strain ATCC 19089 / CIP 103742 / CB 15) (Caulobacter crescentus) protein is Lysine--tRNA ligase.